The following is a 90-amino-acid chain: Co-chaperonin GroES (90 aa).

Belongs to the GroES chaperonin family. In terms of assembly, heptamer of 7 subunits arranged in a ring. Interacts with the chaperonin GroEL.

It is found in the cytoplasm. In terms of biological role, together with the chaperonin GroEL, plays an essential role in assisting protein folding. The GroEL-GroES system forms a nano-cage that allows encapsulation of the non-native substrate proteins and provides a physical environment optimized to promote and accelerate protein folding. GroES binds to the apical surface of the GroEL ring, thereby capping the opening of the GroEL channel. This chain is Co-chaperonin GroES, found in Thermosipho melanesiensis (strain DSM 12029 / CIP 104789 / BI429).